The sequence spans 552 residues: Leucine-rich repeat-containing protein 56 (552 aa).

LRR repeat units lie at residues Asn-94 to Leu-115, His-117 to Leu-138, Glu-139 to Glu-160, Gln-161 to Gln-182, and Arg-186 to Ser-206. Disordered stretches follow at residues Ala-348 to Cys-375 and Gln-401 to Leu-435.

The protein belongs to the LRRC56 family. Interacts with IFT88.

The protein localises to the cell projection. It is found in the cilium. Functionally, required for the assembly of dynein arms. The polypeptide is Leucine-rich repeat-containing protein 56 (Lrrc56) (Mus musculus (Mouse)).